We begin with the raw amino-acid sequence, 199 residues long: FMN-dependent NADH:quinone oxidoreductase (199 aa).

Position 17-19 (17-19 (SYS)) interacts with FMN.

It belongs to the azoreductase type 1 family. In terms of assembly, homodimer. FMN serves as cofactor.

The catalysed reaction is 2 a quinone + NADH + H(+) = 2 a 1,4-benzosemiquinone + NAD(+). It catalyses the reaction N,N-dimethyl-1,4-phenylenediamine + anthranilate + 2 NAD(+) = 2-(4-dimethylaminophenyl)diazenylbenzoate + 2 NADH + 2 H(+). Its function is as follows. Quinone reductase that provides resistance to thiol-specific stress caused by electrophilic quinones. Also exhibits azoreductase activity. Catalyzes the reductive cleavage of the azo bond in aromatic azo compounds to the corresponding amines. The sequence is that of FMN-dependent NADH:quinone oxidoreductase from Mycoplasmopsis synoviae (strain 53) (Mycoplasma synoviae).